Reading from the N-terminus, the 120-residue chain is Small ribosomal subunit protein uS13 (120 aa).

Residues 96-120 (PCRGQRTRTNARTRKGPRKAIAGKK) form a disordered region.

This sequence belongs to the universal ribosomal protein uS13 family. In terms of assembly, part of the 30S ribosomal subunit. Forms a loose heterodimer with protein S19. Forms two bridges to the 50S subunit in the 70S ribosome.

In terms of biological role, located at the top of the head of the 30S subunit, it contacts several helices of the 16S rRNA. In the 70S ribosome it contacts the 23S rRNA (bridge B1a) and protein L5 of the 50S subunit (bridge B1b), connecting the 2 subunits; these bridges are implicated in subunit movement. Contacts the tRNAs in the A and P-sites. The polypeptide is Small ribosomal subunit protein uS13 (Chromobacterium violaceum (strain ATCC 12472 / DSM 30191 / JCM 1249 / CCUG 213 / NBRC 12614 / NCIMB 9131 / NCTC 9757 / MK)).